A 398-amino-acid polypeptide reads, in one-letter code: ATP-dependent RNA helicase eIF4A (398 aa).

The short motif at 25-53 (DSFDSMDLKPELLRGVYAYGFERPSAIQQ) is the Q motif element. Positions 56–226 (IKPIIAGHDV…TKFMRDPIRI (171 aa)) constitute a Helicase ATP-binding domain. 69-76 (AQSGTGKT) provides a ligand contact to ATP. The DEAD box motif lies at 174–177 (DEAD). The 162-residue stretch at 237–398 (GIKQFYIAVE…EMPMNVADLI (162 aa)) folds into the Helicase C-terminal domain.

It belongs to the DEAD box helicase family. eIF4A subfamily. As to quaternary structure, component of the eIF4F complex, which composition varies with external and internal environmental conditions. It is composed of at least eIF4A, eIF4E and eIF4G.

The protein resides in the cytoplasm. It catalyses the reaction ATP + H2O = ADP + phosphate + H(+). In terms of biological role, ATP-dependent RNA helicase which is a subunit of the eIF4F complex involved in cap recognition and is required for mRNA binding to ribosome. In the current model of translation initiation, eIF4A unwinds RNA secondary structures in the 5'-UTR of mRNAs which is necessary to allow efficient binding of the small ribosomal subunit, and subsequent scanning for the initiator codon. The polypeptide is ATP-dependent RNA helicase eIF4A (tif1) (Aspergillus niger (strain ATCC MYA-4892 / CBS 513.88 / FGSC A1513)).